Consider the following 101-residue polypeptide: Protein mes1 (101 aa).

Basic and acidic residues predominate over residues 1 to 19 (MVNTDNKENEPPNMEKAHM). The segment at 1–101 (MVNTDNKENE…RSPNPLLSMR (101 aa)) is disordered.

As to quaternary structure, interacts with slp1.

The protein localises to the cytoplasm. Its subcellular location is the nucleus. Its function is as follows. Specifically required for meiosis II (MII). Binds to slp1, an activator of the anapahase promoting complex/cyclcosome (APC/C), and counteracts its function in promoting proteolysis of cdc13. By suppressing the degradation of cdc13 at anaphase I this protein may help maintain a sufficient level of cdc2 kinase activity to complete MII. This Schizosaccharomyces pombe (strain 972 / ATCC 24843) (Fission yeast) protein is Protein mes1 (mes1).